Here is a 138-residue protein sequence, read N- to C-terminus: Small ribosomal subunit protein uS12 (138 aa).

D89 carries the 3-methylthioaspartic acid modification. Residues 101–138 form a disordered region; sequence ALDTAGTQNRNQGRSKYGTKRPKKGAATAAKGPVKGKK. Positions 105–114 are enriched in polar residues; it reads AGTQNRNQGR. Over residues 125–138 the composition is skewed to low complexity; sequence GAATAAKGPVKGKK.

The protein belongs to the universal ribosomal protein uS12 family. Part of the 30S ribosomal subunit. Contacts proteins S8 and S17. May interact with IF1 in the 30S initiation complex.

Functionally, with S4 and S5 plays an important role in translational accuracy. Its function is as follows. Interacts with and stabilizes bases of the 16S rRNA that are involved in tRNA selection in the A site and with the mRNA backbone. Located at the interface of the 30S and 50S subunits, it traverses the body of the 30S subunit contacting proteins on the other side and probably holding the rRNA structure together. The combined cluster of proteins S8, S12 and S17 appears to hold together the shoulder and platform of the 30S subunit. The sequence is that of Small ribosomal subunit protein uS12 from Heliobacterium modesticaldum (strain ATCC 51547 / Ice1).